We begin with the raw amino-acid sequence, 516 residues long: Delta(24)-sterol reductase (516 aa).

The N-terminal stretch at 1-22 (MEPAVSLAVCALLFLLWVRLKG) is a signal peptide. Residues 23 to 31 (LEFVLIHQR) are Lumenal-facing. A helical transmembrane segment spans residues 32–52 (WVFVCLFLLPLSLIFDIYYYV). Topologically, residues 53-516 (RAWVVFKLSS…YDKICKAARH (464 aa)) are cytoplasmic. The 177-residue stretch at 58–234 (FKLSSAPRLH…VAAEIRIIPA (177 aa)) folds into the FAD-binding PCMH-type domain. 163–175 (TVGGLIMGTGIES) provides a ligand contact to FAD.

It belongs to the FAD-binding oxidoreductase/transferase type 4 family. In terms of assembly, interacts with DHCR7; this interaction regulates DHCR7 activity. Requires FAD as cofactor. Highly expressed in brain and adrenal gland with moderate expression in liver, lung, spleen, prostate and spinal cord. Low expression in heart, uterus and prostate. Undetectable in blood cells. In the brain, strongly expressed in cortical regions, substantia nigra, caudate nucleus, hippocampus, medulla oblongata and pons. In brains affected by Alzheimer disease, expression in the inferior temporal lobe is substantially lower than in the frontal cortex.

The protein resides in the endoplasmic reticulum membrane. The protein localises to the golgi apparatus membrane. It carries out the reaction cholesterol + NADP(+) = desmosterol + NADPH + H(+). The catalysed reaction is lanosterol + NADPH + H(+) = 24,25-dihydrolanosterol + NADP(+). It catalyses the reaction 5alpha-cholest-8-en-3beta-ol + NADP(+) = zymosterol + NADPH + H(+). It participates in steroid biosynthesis; cholesterol biosynthesis. Its function is as follows. Catalyzes the reduction of the delta-24 double bond of sterol intermediates during cholesterol biosynthesis. In addition to its cholesterol-synthesizing activity, can protect cells from oxidative stress by reducing caspase 3 activity during apoptosis induced by oxidative stress. Also protects against amyloid-beta peptide-induced apoptosis. The protein is Delta(24)-sterol reductase (DHCR24) of Homo sapiens (Human).